Consider the following 526-residue polypeptide: tRNA-2-methylthio-N(6)-dimethylallyladenosine synthase (526 aa).

Positions 14–130 (RTYQVRTYGC…LPTLLERARH (117 aa)) constitute an MTTase N-terminal domain. [4Fe-4S] cluster-binding residues include Cys-23, Cys-59, Cys-93, Cys-167, Cys-171, and Cys-174. Positions 153-401 (RESAYAGWVS…IELQERISLE (249 aa)) constitute a Radical SAM core domain. Residues 404–483 (QAQVGRTLEL…PHHLIADGAL (80 aa)) enclose the TRAM domain.

The protein belongs to the methylthiotransferase family. MiaB subfamily. In terms of assembly, monomer. [4Fe-4S] cluster is required as a cofactor.

The protein resides in the cytoplasm. The enzyme catalyses N(6)-dimethylallyladenosine(37) in tRNA + (sulfur carrier)-SH + AH2 + 2 S-adenosyl-L-methionine = 2-methylsulfanyl-N(6)-dimethylallyladenosine(37) in tRNA + (sulfur carrier)-H + 5'-deoxyadenosine + L-methionine + A + S-adenosyl-L-homocysteine + 2 H(+). Functionally, catalyzes the methylthiolation of N6-(dimethylallyl)adenosine (i(6)A), leading to the formation of 2-methylthio-N6-(dimethylallyl)adenosine (ms(2)i(6)A) at position 37 in tRNAs that read codons beginning with uridine. The sequence is that of tRNA-2-methylthio-N(6)-dimethylallyladenosine synthase from Mycobacterium sp. (strain JLS).